The sequence spans 226 residues: UPF0758 protein gbs1168 (226 aa).

The MPN domain occupies Gln103–Ile225. Residues His174, His176, and Asp187 each coordinate Zn(2+). A JAMM motif motif is present at residues His174–Asp187.

This sequence belongs to the UPF0758 family.

The sequence is that of UPF0758 protein gbs1168 from Streptococcus agalactiae serotype III (strain NEM316).